We begin with the raw amino-acid sequence, 111 residues long: Iron-sulfur cluster insertion protein ErpA (111 aa).

Residues Cys39, Cys103, and Cys105 each coordinate iron-sulfur cluster.

This sequence belongs to the HesB/IscA family. As to quaternary structure, homodimer. It depends on iron-sulfur cluster as a cofactor.

Functionally, required for insertion of 4Fe-4S clusters for at least IspG. The chain is Iron-sulfur cluster insertion protein ErpA from Acinetobacter baumannii (strain SDF).